We begin with the raw amino-acid sequence, 208 residues long: 3-demethoxyubiquinol 3-hydroxylase (208 aa).

Residues Glu57, Glu87, His90, Glu139, Glu171, and His174 each coordinate Fe cation.

Belongs to the COQ7 family. The cofactor is Fe cation.

It localises to the cell membrane. It catalyses the reaction a 5-methoxy-2-methyl-3-(all-trans-polyprenyl)benzene-1,4-diol + AH2 + O2 = a 3-demethylubiquinol + A + H2O. Its pathway is cofactor biosynthesis; ubiquinone biosynthesis. Its function is as follows. Catalyzes the hydroxylation of 2-nonaprenyl-3-methyl-6-methoxy-1,4-benzoquinol during ubiquinone biosynthesis. The chain is 3-demethoxyubiquinol 3-hydroxylase from Burkholderia ambifaria (strain ATCC BAA-244 / DSM 16087 / CCUG 44356 / LMG 19182 / AMMD) (Burkholderia cepacia (strain AMMD)).